Reading from the N-terminus, the 425-residue chain is Histidinol dehydrogenase (425 aa).

Residues serine 231, glutamine 253, and histidine 256 each coordinate substrate. The Zn(2+) site is built by glutamine 253 and histidine 256. Catalysis depends on proton acceptor residues glutamate 321 and histidine 322. Positions 322, 355, 409, and 414 each coordinate substrate. Aspartate 355 lines the Zn(2+) pocket. A Zn(2+)-binding site is contributed by histidine 414.

This sequence belongs to the histidinol dehydrogenase family. The cofactor is Zn(2+).

It carries out the reaction L-histidinol + 2 NAD(+) + H2O = L-histidine + 2 NADH + 3 H(+). Its pathway is amino-acid biosynthesis; L-histidine biosynthesis; L-histidine from 5-phospho-alpha-D-ribose 1-diphosphate: step 9/9. Catalyzes the sequential NAD-dependent oxidations of L-histidinol to L-histidinaldehyde and then to L-histidine. In Carboxydothermus hydrogenoformans (strain ATCC BAA-161 / DSM 6008 / Z-2901), this protein is Histidinol dehydrogenase.